The primary structure comprises 575 residues: V-type ATP synthase alpha chain (575 aa).

ATP is bound at residue 238–245 (GPFGAGKT).

This sequence belongs to the ATPase alpha/beta chains family.

The enzyme catalyses ATP + H2O + 4 H(+)(in) = ADP + phosphate + 5 H(+)(out). Functionally, produces ATP from ADP in the presence of a proton gradient across the membrane. The V-type alpha chain is a catalytic subunit. This chain is V-type ATP synthase alpha chain, found in Borreliella afzelii (strain PKo) (Borrelia afzelii).